Consider the following 206-residue polypeptide: Probable N-acetyltransferase 14 (206 aa).

In terms of domain architecture, N-acetyltransferase spans 6–206 (LSVREMREDE…TLVREFSKDL (201 aa)). A helical membrane pass occupies residues 57–77 (FVLASFALALLLPVFLAVAAV).

The protein belongs to the camello family. As to expression, expressed in K-562 and HeLa cell lines and in brain.

It localises to the membrane. In terms of biological role, probable acetyltransferase. May act as a transcription factor that regulates the expression of coproporphyrinogen oxidase by binding to a promoter regulatory element. The sequence is that of Probable N-acetyltransferase 14 (NAT14) from Homo sapiens (Human).